Reading from the N-terminus, the 89-residue chain is Small ribosomal subunit protein uS15 (89 aa).

It belongs to the universal ribosomal protein uS15 family. Part of the 30S ribosomal subunit. Forms a bridge to the 50S subunit in the 70S ribosome, contacting the 23S rRNA.

One of the primary rRNA binding proteins, it binds directly to 16S rRNA where it helps nucleate assembly of the platform of the 30S subunit by binding and bridging several RNA helices of the 16S rRNA. In terms of biological role, forms an intersubunit bridge (bridge B4) with the 23S rRNA of the 50S subunit in the ribosome. This chain is Small ribosomal subunit protein uS15, found in Bacillus licheniformis (strain ATCC 14580 / DSM 13 / JCM 2505 / CCUG 7422 / NBRC 12200 / NCIMB 9375 / NCTC 10341 / NRRL NRS-1264 / Gibson 46).